The following is a 170-amino-acid chain: tRNA-splicing endonuclease (170 aa).

Active-site residues include Y110, H116, and K147.

Belongs to the tRNA-intron endonuclease family. Archaeal short subfamily. Homotetramer; although the tetramer contains four active sites, only two participate in the cleavage. Therefore, it should be considered as a dimer of dimers.

The enzyme catalyses pretRNA = a 3'-half-tRNA molecule with a 5'-OH end + a 5'-half-tRNA molecule with a 2',3'-cyclic phosphate end + an intron with a 2',3'-cyclic phosphate and a 5'-hydroxyl terminus.. Endonuclease that removes tRNA introns. Cleaves pre-tRNA at the 5'- and 3'-splice sites to release the intron. The products are an intron and two tRNA half-molecules bearing 2',3' cyclic phosphate and 5'-OH termini. Recognizes a pseudosymmetric substrate in which 2 bulged loops of 3 bases are separated by a stem of 4 bp. The protein is tRNA-splicing endonuclease of Pyrococcus horikoshii (strain ATCC 700860 / DSM 12428 / JCM 9974 / NBRC 100139 / OT-3).